Here is a 275-residue protein sequence, read N- to C-terminus: Voltage-dependent calcium channel gamma-5 subunit (275 aa).

The next 4 membrane-spanning stretches (helical) occupy residues 8 to 28, 103 to 123, 129 to 149, and 176 to 196; these read ALTL…GIAV, FPLV…IGHI, ILAF…VVGL, and GWSF…GVMS.

This sequence belongs to the PMP-22/EMP/MP20 family. CACNG subfamily. In terms of assembly, the L-type calcium channel is composed of five subunits: alpha-1, alpha-2/delta, beta and gamma. Acts as an auxiliary subunit for AMPA-selective glutamate receptors (AMPARs). Found in a complex with GRIA1, GRIA2, GRIA3, GRIA4, CNIH2, CNIH3, CACNG2, CACNG3, CACNG4, CACNG7 and CACNG8. Interacts with GRIA1, GRIA2, GRIA3 and GRIA4.

It localises to the membrane. It is found in the postsynaptic density membrane. Functionally, regulates the gating properties of AMPA-selective glutamate receptors (AMPARs). Modulates their gating properties by accelerating their rates of activation, deactivation and desensitization. Displays subunit-specific AMPA receptor regulation. Shows specificity for GRIA1, GRIA4 and the long isoform of GRIA2. Thought to stabilize the calcium channel in an inactivated (closed) state. This chain is Voltage-dependent calcium channel gamma-5 subunit (CACNG5), found in Homo sapiens (Human).